Consider the following 349-residue polypeptide: Divinyl chlorophyll a/b light-harvesting protein PcbE (349 aa).

Helical transmembrane passes span F27–L47, I65–G85, V88–L108, V201–A221, A241–C261, and L308–L328.

This sequence belongs to the PsbB/PsbC family. IsiA/Pcb subfamily. As to quaternary structure, the antenna complex consists of divinyl chlorophylls (a and b) and divinyl chlorophyll a/b binding proteins and binds more divinyl chlorophyll b than does the antenna complex from high-light-adapted Prochlorococcus. Divinyl chlorophyll a is required as a cofactor. Requires divinyl chlorophyll b as cofactor.

The protein localises to the cellular thylakoid membrane. In terms of biological role, the antenna complex functions as a light receptor, it captures and delivers excitation energy to photosystems II and I. The Prochlorales pcb genes are not related to higher plant LHCs. This Prochlorococcus marinus (strain NATL2A) protein is Divinyl chlorophyll a/b light-harvesting protein PcbE (pcbE).